A 513-amino-acid chain; its full sequence is Sterol 14-alpha demethylase rstn2 (513 aa).

The helical transmembrane segment at 3–23 (WPLIGAYALLAFVAIIALNVT) threads the bilayer. Cys453 provides a ligand contact to heme.

Belongs to the cytochrome P450 family. Heme serves as cofactor.

Its subcellular location is the membrane. The enzyme catalyses a 14alpha-methyl steroid + 3 reduced [NADPH--hemoprotein reductase] + 3 O2 = a Delta(14) steroid + formate + 3 oxidized [NADPH--hemoprotein reductase] + 4 H2O + 4 H(+). The catalysed reaction is a 14alpha-methyl steroid + reduced [NADPH--hemoprotein reductase] + O2 = a 14alpha-hydroxymethyl steroid + oxidized [NADPH--hemoprotein reductase] + H2O + H(+). It carries out the reaction a 14alpha-hydroxymethyl steroid + reduced [NADPH--hemoprotein reductase] + O2 = a 14alpha-formyl steroid + oxidized [NADPH--hemoprotein reductase] + 2 H2O + H(+). It catalyses the reaction a 14alpha-formyl steroid + reduced [NADPH--hemoprotein reductase] + O2 = a Delta(14) steroid + formate + oxidized [NADPH--hemoprotein reductase] + H2O + 2 H(+). The enzyme catalyses lanosterol + 3 reduced [NADPH--hemoprotein reductase] + 3 O2 = 4,4-dimethyl-5alpha-cholesta-8,14,24-trien-3beta-ol + formate + 3 oxidized [NADPH--hemoprotein reductase] + 4 H2O + 4 H(+). The catalysed reaction is lanosterol + reduced [NADPH--hemoprotein reductase] + O2 = 32-hydroxylanosterol + oxidized [NADPH--hemoprotein reductase] + H2O + H(+). It carries out the reaction 32-hydroxylanosterol + reduced [NADPH--hemoprotein reductase] + O2 = 32-oxolanosterol + oxidized [NADPH--hemoprotein reductase] + 2 H2O + H(+). It catalyses the reaction 32-oxolanosterol + reduced [NADPH--hemoprotein reductase] + O2 = 4,4-dimethyl-5alpha-cholesta-8,14,24-trien-3beta-ol + formate + oxidized [NADPH--hemoprotein reductase] + H2O + 2 H(+). The enzyme catalyses eburicol + 3 reduced [NADPH--hemoprotein reductase] + 3 O2 = 14-demethyleburicol + formate + 3 oxidized [NADPH--hemoprotein reductase] + 4 H2O + 4 H(+). The catalysed reaction is eburicol + reduced [NADPH--hemoprotein reductase] + O2 = 32-hydroxyeburicol + oxidized [NADPH--hemoprotein reductase] + H2O + H(+). It carries out the reaction 32-hydroxyeburicol + reduced [NADPH--hemoprotein reductase] + O2 = 32-oxoeburicol + oxidized [NADPH--hemoprotein reductase] + 2 H2O + H(+). It catalyses the reaction 32-oxoeburicol + reduced [NADPH--hemoprotein reductase] + O2 = 14-demethyleburicol + formate + oxidized [NADPH--hemoprotein reductase] + H2O + 2 H(+). Its pathway is steroid biosynthesis; sterol biosynthesis. In terms of biological role, sterol 14-alpha demethylase; part of the gene cluster that mediates the biosynthesis of the tetrahydropyranyl antifungal agent restricticin that acts as an inhibitor of CYP51 and blocks the ergosterol biosynthesis. Sterol 14-alpha-demethylase plays a critical role in the biosynthesis of ergosterol, the major sterol component in fungal membranes that participates in a variety of functions. Rtsn2 acts as a self-resistant CYP51 that contains mutations found in CYP51s isolated from azole resistance strains and that is not inhibited by the final product of the cluster, restricticin. The chain is Sterol 14-alpha demethylase rstn2 from Aspergillus nomiae NRRL (strain ATCC 15546 / NRRL 13137 / CBS 260.88 / M93).